We begin with the raw amino-acid sequence, 176 residues long: Shikimate kinase (176 aa).

12-17 (GSGKST) is an ATP binding site. Ser16 is a binding site for Mg(2+). Residues Asp34, Arg58, and Gly80 each coordinate substrate. Arg117 provides a ligand contact to ATP. Arg136 lines the substrate pocket. Position 153 (Arg153) interacts with ATP.

This sequence belongs to the shikimate kinase family. Monomer. Mg(2+) is required as a cofactor.

It is found in the cytoplasm. It carries out the reaction shikimate + ATP = 3-phosphoshikimate + ADP + H(+). It participates in metabolic intermediate biosynthesis; chorismate biosynthesis; chorismate from D-erythrose 4-phosphate and phosphoenolpyruvate: step 5/7. Catalyzes the specific phosphorylation of the 3-hydroxyl group of shikimic acid using ATP as a cosubstrate. This is Shikimate kinase from Mycobacterium avium (strain 104).